We begin with the raw amino-acid sequence, 147 residues long: 16 kDa heat shock protein B (147 aa).

The region spanning 29–141 (NEAGSTYPPY…APSAFRSAAA (113 aa)) is the sHSP domain.

Belongs to the small heat shock protein (HSP20) family.

The chain is 16 kDa heat shock protein B (ibpB) from Azotobacter vinelandii.